The chain runs to 178 residues: GTP-dependent dephospho-CoA kinase (178 aa).

5 residues coordinate GTP: Asp-55, Val-57, Asp-74, Lys-76, and Glu-127.

The protein belongs to the GTP-dependent DPCK family.

The catalysed reaction is 3'-dephospho-CoA + GTP = GDP + CoA + H(+). The protein operates within cofactor biosynthesis; coenzyme A biosynthesis. In terms of biological role, catalyzes the GTP-dependent phosphorylation of the 3'-hydroxyl group of dephosphocoenzyme A to form coenzyme A (CoA). The polypeptide is GTP-dependent dephospho-CoA kinase (Saccharolobus islandicus (strain Y.N.15.51 / Yellowstone #2) (Sulfolobus islandicus)).